Here is a 307-residue protein sequence, read N- to C-terminus: Nucleotide-binding protein Achl_1824 (307 aa).

Gly30–Ser37 serves as a coordination point for ATP. Position 81–84 (Asp81–Ser84) interacts with GTP.

Belongs to the RapZ-like family.

Displays ATPase and GTPase activities. In Pseudarthrobacter chlorophenolicus (strain ATCC 700700 / DSM 12829 / CIP 107037 / JCM 12360 / KCTC 9906 / NCIMB 13794 / A6) (Arthrobacter chlorophenolicus), this protein is Nucleotide-binding protein Achl_1824.